Consider the following 227-residue polypeptide: Large ribosomal subunit protein uL3 (227 aa).

It belongs to the universal ribosomal protein uL3 family. As to quaternary structure, part of the 50S ribosomal subunit. Forms a cluster with proteins L14 and L19.

In terms of biological role, one of the primary rRNA binding proteins, it binds directly near the 3'-end of the 23S rRNA, where it nucleates assembly of the 50S subunit. The protein is Large ribosomal subunit protein uL3 of Persephonella marina (strain DSM 14350 / EX-H1).